The primary structure comprises 642 residues: MPVITLPDGSKREFAHSVSTLDVAADIGPGLAKACIAGRVNGELKDACDLIETDSDLSIITAKDEEGVEILRHSCAHLLGHAIKQLFPETKMAIGPVIDNGFYYDIDLDHKLTQEDIDALEKRMAELAKTNYAVDKRVVSWQEARDTFESRGEVYKMAILDENIPKDSTPALYHHEEYIDMCRGPHVPNMKFCQNFKLMSVAGAYWRGNSDNKMLQRVYGTAWADKKALKVHLNRLEEAAKRDHRKIGKQLDLYHMQEEAPGMVFWHNDGWSLFLELEKFIRQKLGQYTYQEVKGPLMMDRVLWERSGHWDKYSEAMFTTSSENREYAVKPMNCPGHVQIFNQGLKSYRDLPLRMAEFGCCHRNEPSGSLHGLMRVRGFTQDDAHIFCTEEQVQQEVSACIKMVYDTYETFGFNSIVVKLSTRPEKRIGDDEMWDRAEEALKQALKANDIEFEILPGEGAFYGPKIEFTLHDCLDRAWQCGTVQLDYALPGRLGATYVAEDNSRQTPVMIHRAILGSLERFLGILIEEYAGKFPAWLSPVQVVVMNITDKQSDYVDEVVNLFKEHGIRATKDLRNEKIGFKIREHTLRRVPYLLVVGDQEMENKEVAVRTREGVDLGKMQIEEFATKLKNQISLRSLNLLED.

The TGS domain occupies 1-61 (MPVITLPDGS…ETDSDLSIIT (61 aa)). The catalytic stretch occupies residues 243–534 (DHRKIGKQLD…LIEEYAGKFP (292 aa)). Zn(2+)-binding residues include Cys334, His385, and His511.

Belongs to the class-II aminoacyl-tRNA synthetase family. Homodimer. Zn(2+) is required as a cofactor.

The protein resides in the cytoplasm. The catalysed reaction is tRNA(Thr) + L-threonine + ATP = L-threonyl-tRNA(Thr) + AMP + diphosphate + H(+). Functionally, catalyzes the attachment of threonine to tRNA(Thr) in a two-step reaction: L-threonine is first activated by ATP to form Thr-AMP and then transferred to the acceptor end of tRNA(Thr). Also edits incorrectly charged L-seryl-tRNA(Thr). The chain is Threonine--tRNA ligase from Shewanella pealeana (strain ATCC 700345 / ANG-SQ1).